The chain runs to 216 residues: ATP-dependent Clp protease proteolytic subunit (216 aa).

The active-site Nucleophile is the serine 103. Residue histidine 128 is part of the active site. The interval 197-216 (RRPALPGDDAPRDVSEGPTP) is disordered.

This sequence belongs to the peptidase S14 family. Fourteen ClpP subunits assemble into 2 heptameric rings which stack back to back to give a disk-like structure with a central cavity, resembling the structure of eukaryotic proteasomes.

The protein localises to the cytoplasm. The catalysed reaction is Hydrolysis of proteins to small peptides in the presence of ATP and magnesium. alpha-casein is the usual test substrate. In the absence of ATP, only oligopeptides shorter than five residues are hydrolyzed (such as succinyl-Leu-Tyr-|-NHMec, and Leu-Tyr-Leu-|-Tyr-Trp, in which cleavage of the -Tyr-|-Leu- and -Tyr-|-Trp bonds also occurs).. Its function is as follows. Cleaves peptides in various proteins in a process that requires ATP hydrolysis. Has a chymotrypsin-like activity. Plays a major role in the degradation of misfolded proteins. The chain is ATP-dependent Clp protease proteolytic subunit from Sphingopyxis alaskensis (strain DSM 13593 / LMG 18877 / RB2256) (Sphingomonas alaskensis).